A 396-amino-acid chain; its full sequence is MAKGKFERTKPHVNVGTIGHVDHGKTTLTAAITTVLTKKFGGEAKDYSQIDNAPEEKARGITINTSHVEYETETRHYAHVDCPGHADYVKNMITGAAQMDGAILVVSAADGPMPQTREHILLARQVGVPYIIVFLNKADMVDDAELLELVEMEVRELLSKYDFPGDDTPIIKGSAKLALEGDQSDIGEPAIFRLAEALDTYIPTPERAVDGTFLMPVEDVFSISGRGTVVTGRVERGIVKVGDEIEIVGLKPTIKTTCTGVEMFRKLLDQGQAGDNVGVLLRGTKREEVERGQVLAKVGSIKPHTKFTAEIYVLGKDEGGRHTPFFNGYRPQFYFRTTDVTGAVELPAGTEMVMPGDNVSISVSLIAPIAMEEGLRFAIREGGRTVGAGVVAKIIE.

Positions 10-206 constitute a tr-type G domain; it reads KPHVNVGTIG…ALDTYIPTPE (197 aa). Residues 19–26 form a G1 region; that stretch reads GHVDHGKT. 19 to 26 is a binding site for GTP; sequence GHVDHGKT. Residue T26 coordinates Mg(2+). Residues 60-64 form a G2 region; it reads GITIN. A G3 region spans residues 81–84; the sequence is DCPG. Residues 81 to 85 and 136 to 139 each bind GTP; these read DCPGH and NKAD. Residues 136–139 form a G4 region; the sequence is NKAD. Residues 174-176 are G5; that stretch reads SAK.

It belongs to the TRAFAC class translation factor GTPase superfamily. Classic translation factor GTPase family. EF-Tu/EF-1A subfamily. In terms of assembly, monomer.

Its subcellular location is the cytoplasm. The catalysed reaction is GTP + H2O = GDP + phosphate + H(+). GTP hydrolase that promotes the GTP-dependent binding of aminoacyl-tRNA to the A-site of ribosomes during protein biosynthesis. This chain is Elongation factor Tu 1, found in Methylobacillus flagellatus (strain ATCC 51484 / DSM 6875 / VKM B-1610 / KT).